Reading from the N-terminus, the 361-residue chain is Flagellar P-ring protein (361 aa).

Positions 1–18 (MRKFTILLMLLLASSAQA) are cleaved as a signal peptide.

Belongs to the FlgI family. The basal body constitutes a major portion of the flagellar organelle and consists of four rings (L,P,S, and M) mounted on a central rod.

The protein resides in the periplasm. It is found in the bacterial flagellum basal body. Assembles around the rod to form the L-ring and probably protects the motor/basal body from shearing forces during rotation. The polypeptide is Flagellar P-ring protein (Vibrio cholerae serotype O1 (strain ATCC 39541 / Classical Ogawa 395 / O395)).